The chain runs to 229 residues: NAD(P)H-hydrate epimerase (229 aa).

The YjeF N-terminal domain occupies 10-217 (AINVDLELFN…ALQRKYELNL (208 aa)). Position 60–64 (60–64 (NNGGD)) interacts with (6S)-NADPHX. 2 residues coordinate K(+): Asn61 and Asp125. Residues 129-135 (GFSFKPP) and Asp158 contribute to the (6S)-NADPHX site. K(+) is bound at residue Ser161.

It belongs to the NnrE/AIBP family. It depends on K(+) as a cofactor.

It carries out the reaction (6R)-NADHX = (6S)-NADHX. The catalysed reaction is (6R)-NADPHX = (6S)-NADPHX. Functionally, catalyzes the epimerization of the S- and R-forms of NAD(P)HX, a damaged form of NAD(P)H that is a result of enzymatic or heat-dependent hydration. This is a prerequisite for the S-specific NAD(P)H-hydrate dehydratase to allow the repair of both epimers of NAD(P)HX. The polypeptide is NAD(P)H-hydrate epimerase (Drosophila mojavensis (Fruit fly)).